We begin with the raw amino-acid sequence, 614 residues long: Dihydroxy-acid dehydratase (614 aa).

Asp-81 contributes to the Mg(2+) binding site. Residue Cys-122 participates in [2Fe-2S] cluster binding. Residues Asp-123 and Lys-124 each coordinate Mg(2+). Position 124 is an N6-carboxylysine (Lys-124). Cys-193 contacts [2Fe-2S] cluster. Glu-489 provides a ligand contact to Mg(2+). Residue Ser-515 is the Proton acceptor of the active site.

The protein belongs to the IlvD/Edd family. In terms of assembly, homodimer. [2Fe-2S] cluster is required as a cofactor. Requires Mg(2+) as cofactor.

It carries out the reaction (2R)-2,3-dihydroxy-3-methylbutanoate = 3-methyl-2-oxobutanoate + H2O. The catalysed reaction is (2R,3R)-2,3-dihydroxy-3-methylpentanoate = (S)-3-methyl-2-oxopentanoate + H2O. It participates in amino-acid biosynthesis; L-isoleucine biosynthesis; L-isoleucine from 2-oxobutanoate: step 3/4. Its pathway is amino-acid biosynthesis; L-valine biosynthesis; L-valine from pyruvate: step 3/4. Its function is as follows. Functions in the biosynthesis of branched-chain amino acids. Catalyzes the dehydration of (2R,3R)-2,3-dihydroxy-3-methylpentanoate (2,3-dihydroxy-3-methylvalerate) into 2-oxo-3-methylpentanoate (2-oxo-3-methylvalerate) and of (2R)-2,3-dihydroxy-3-methylbutanoate (2,3-dihydroxyisovalerate) into 2-oxo-3-methylbutanoate (2-oxoisovalerate), the penultimate precursor to L-isoleucine and L-valine, respectively. This Marinomonas sp. (strain MWYL1) protein is Dihydroxy-acid dehydratase.